The sequence spans 137 residues: uncharacterized protein (137 aa).

The protein belongs to the ycf72 family.

The protein resides in the plastid. It localises to the chloroplast. This is an uncharacterized protein from Oryza nivara (Indian wild rice).